A 635-amino-acid chain; its full sequence is 1-deoxy-D-xylulose-5-phosphate synthase (635 aa).

Thiamine diphosphate is bound by residues H72 and 113 to 115 (GHA). D144 is a Mg(2+) binding site. Residues 145–146 (GA), N174, Y286, and E369 each bind thiamine diphosphate. N174 contributes to the Mg(2+) binding site.

The protein belongs to the transketolase family. DXPS subfamily. Homodimer. It depends on Mg(2+) as a cofactor. Requires thiamine diphosphate as cofactor.

It carries out the reaction D-glyceraldehyde 3-phosphate + pyruvate + H(+) = 1-deoxy-D-xylulose 5-phosphate + CO2. The protein operates within metabolic intermediate biosynthesis; 1-deoxy-D-xylulose 5-phosphate biosynthesis; 1-deoxy-D-xylulose 5-phosphate from D-glyceraldehyde 3-phosphate and pyruvate: step 1/1. Functionally, catalyzes the acyloin condensation reaction between C atoms 2 and 3 of pyruvate and glyceraldehyde 3-phosphate to yield 1-deoxy-D-xylulose-5-phosphate (DXP). The chain is 1-deoxy-D-xylulose-5-phosphate synthase from Acaryochloris marina (strain MBIC 11017).